Here is a 259-residue protein sequence, read N- to C-terminus: Ferritin-4, chloroplastic (259 aa).

The N-terminal 57 residues, 1–57 (MLLKTVSSSSSSALSLVNFHGVKKDVSPLLPSISSNLRVSSGKSGNLTFSFRASKSS), are a transit peptide targeting the chloroplast. The extension peptide (EP) stretch occupies residues 58–90 (TTDALSGVVFEPFKEVKKELDLVPTSSHLSLAR). Positions 91–244 (QKYSDECEAA…EYVAQLRRVG (154 aa)) constitute a Ferritin-like diiron domain. Fe cation contacts are provided by glutamate 108, glutamate 143, histidine 146, glutamate 192, and glutamine 226.

The protein belongs to the ferritin family. In terms of assembly, oligomer of 24 subunits. There are two types of subunits: L (light) chain and H (heavy) chain. The major chain can be light or heavy, depending on the species and tissue type. The functional molecule forms a roughly spherical shell with a diameter of 12 nm and contains a central cavity into which the insoluble mineral iron core is deposited.

Its subcellular location is the plastid. The protein resides in the chloroplast. It catalyses the reaction 4 Fe(2+) + O2 + 4 H(+) = 4 Fe(3+) + 2 H2O. Its function is as follows. Stores iron in a soluble, non-toxic, readily available form. Important for iron homeostasis. Has ferroxidase activity. Iron is taken up in the ferrous form and deposited as ferric hydroxides after oxidation. The polypeptide is Ferritin-4, chloroplastic (FER4) (Arabidopsis thaliana (Mouse-ear cress)).